A 276-amino-acid polypeptide reads, in one-letter code: Putative respiratory nitrate reductase heme subunit ORF7 (276 aa).

Positions 138 and 228 each coordinate heme b.

Probable multiprotein complex; a catalytic heterodimer of an alpha and beta chain is proposed to associate with additional subunits involved in membrane attachment and electron transfer. Heme b is required as a cofactor.

The protein resides in the cell membrane. The respiratory membrane-bound nitrate reductase enzyme complex plays a role in generation of metabolic energy by using nitrate as a terminal electron acceptor during anaerobic conditions. May transfer electrons to the iron-sulfur centers of the catalytic beta subunit. This chain is Putative respiratory nitrate reductase heme subunit ORF7, found in Haloferax mediterranei (strain ATCC 33500 / DSM 1411 / JCM 8866 / NBRC 14739 / NCIMB 2177 / R-4) (Halobacterium mediterranei).